A 364-amino-acid polypeptide reads, in one-letter code: 3-isopropylmalate dehydrogenase (364 aa).

NAD(+) is bound at residue glycine 76 to glutamate 89. Positions 96, 106, 134, and 223 each coordinate substrate. Mg(2+)-binding residues include aspartate 223, aspartate 247, and aspartate 251. Glycine 281 to asparagine 293 contacts NAD(+).

It belongs to the isocitrate and isopropylmalate dehydrogenases family. LeuB type 1 subfamily. In terms of assembly, homodimer. Mg(2+) is required as a cofactor. The cofactor is Mn(2+).

The protein localises to the cytoplasm. The enzyme catalyses (2R,3S)-3-isopropylmalate + NAD(+) = 4-methyl-2-oxopentanoate + CO2 + NADH. It participates in amino-acid biosynthesis; L-leucine biosynthesis; L-leucine from 3-methyl-2-oxobutanoate: step 3/4. Functionally, catalyzes the oxidation of 3-carboxy-2-hydroxy-4-methylpentanoate (3-isopropylmalate) to 3-carboxy-4-methyl-2-oxopentanoate. The product decarboxylates to 4-methyl-2 oxopentanoate. This chain is 3-isopropylmalate dehydrogenase, found in Shouchella clausii (strain KSM-K16) (Alkalihalobacillus clausii).